A 150-amino-acid polypeptide reads, in one-letter code: Cytochrome c oxidase subunit 5A, mitochondrial (150 aa).

A mitochondrion-targeting transit peptide spans 1 to 41 (MLGAALRRCAVAATTWAGPRGLLHSARTPGPAAAIQSVRCY). The SIFI-degron signature appears at 2-17 (LGAALRRCAVAATTWA). N6-acetyllysine is present on residues K87 and K113. A Phosphothreonine modification is found at T141.

This sequence belongs to the cytochrome c oxidase subunit 5A family. As to quaternary structure, component of the cytochrome c oxidase (complex IV, CIV), a multisubunit enzyme composed of 14 subunits. The complex is composed of a catalytic core of 3 subunits MT-CO1, MT-CO2 and MT-CO3, encoded in the mitochondrial DNA, and 11 supernumerary subunits COX4I, COX5A, COX5B, COX6A, COX6B, COX6C, COX7A, COX7B, COX7C, COX8 and NDUFA4, which are encoded in the nuclear genome. The complex exists as a monomer or a dimer and forms supercomplexes (SCs) in the inner mitochondrial membrane with NADH-ubiquinone oxidoreductase (complex I, CI) and ubiquinol-cytochrome c oxidoreductase (cytochrome b-c1 complex, complex III, CIII), resulting in different assemblies (supercomplex SCI(1)III(2)IV(1) and megacomplex MCI(2)III(2)IV(2)). Interacts with AFG1L. Interacts with RAB5IF. In response to mitochondrial stress, the precursor protein is ubiquitinated by the SIFI complex in the cytoplasm before mitochondrial import, leading to its degradation. Within the SIFI complex, UBR4 initiates ubiquitin chain that are further elongated or branched by KCMF1.

It localises to the mitochondrion inner membrane. It participates in energy metabolism; oxidative phosphorylation. Its function is as follows. Component of the cytochrome c oxidase, the last enzyme in the mitochondrial electron transport chain which drives oxidative phosphorylation. The respiratory chain contains 3 multisubunit complexes succinate dehydrogenase (complex II, CII), ubiquinol-cytochrome c oxidoreductase (cytochrome b-c1 complex, complex III, CIII) and cytochrome c oxidase (complex IV, CIV), that cooperate to transfer electrons derived from NADH and succinate to molecular oxygen, creating an electrochemical gradient over the inner membrane that drives transmembrane transport and the ATP synthase. Cytochrome c oxidase is the component of the respiratory chain that catalyzes the reduction of oxygen to water. Electrons originating from reduced cytochrome c in the intermembrane space (IMS) are transferred via the dinuclear copper A center (CU(A)) of subunit 2 and heme A of subunit 1 to the active site in subunit 1, a binuclear center (BNC) formed by heme A3 and copper B (CU(B)). The BNC reduces molecular oxygen to 2 water molecules using 4 electrons from cytochrome c in the IMS and 4 protons from the mitochondrial matrix. The chain is Cytochrome c oxidase subunit 5A, mitochondrial (COX5A) from Papio anubis (Olive baboon).